Here is a 427-residue protein sequence, read N- to C-terminus: Steroid C26-monooxygenase (427 aa).

Cysteine 360 is a binding site for heme.

It belongs to the cytochrome P450 family. It depends on heme as a cofactor.

It carries out the reaction cholest-4-en-3-one + 6 reduced [2Fe-2S]-[ferredoxin] + 3 O2 + 5 H(+) = (25S)-3-oxocholest-4-en-26-oate + 6 oxidized [2Fe-2S]-[ferredoxin] + 4 H2O. It participates in steroid metabolism; cholesterol degradation. Functionally, involved in the utilization of cholesterol as the sole carbon and energy source by degrading the side chain. Primarily catalyzes the sequential oxidation of the terminal methyl of cholest-4-en-3-one into (25S)-26-hydroxycholest-4-en-3-one (alcohol), (25S)-26-oxocholest-4-en-3-one (aldehyde), to finally yield the carboxylic acid (25S)-3-oxocholest-4-en-26-oate. Also able to sequentially oxidize cholesterol itself, not only cholest-4-en-3-one. This Mycolicibacterium smegmatis (strain ATCC 700084 / mc(2)155) (Mycobacterium smegmatis) protein is Steroid C26-monooxygenase.